The chain runs to 81 residues: uncharacterized protein (81 aa).

A signal peptide spans 1-16 (MNRLTFYGLCLSGAVG). Positions 55–81 (TIDPHHNHHDDHHDSHGHGHGKIKGHH) are disordered. Over residues 57–71 (DPHHNHHDDHHDSHG) the composition is skewed to basic and acidic residues. The segment covering 72–81 (HGHGKIKGHH) has biased composition (basic residues).

The protein resides in the secreted. This is an uncharacterized protein from Dictyostelium discoideum (Social amoeba).